The primary structure comprises 110 residues: MKINENKKDIKDIVNEILISLNINESINIEIKPMKQKIASFSFKTKTLRLNKYVVENFDEELLHYIILHELIHFKIKSINHGIKFENELRNYFSKNECDEIELKIIQKLI.

The protein to M.jannaschii MJ1213 and A.aeolicus AA15.

This is an uncharacterized protein from Methanocaldococcus jannaschii (strain ATCC 43067 / DSM 2661 / JAL-1 / JCM 10045 / NBRC 100440) (Methanococcus jannaschii).